The sequence spans 738 residues: Protostadienol synthase A (738 aa).

The PFTB 1 repeat unit spans residues 132–173 (KQEMCRYLLNVVNEDGGWGLFIQSPSTVFGTVMNYCMLRILG). D463 functions as the Proton donor in the catalytic mechanism. PFTB repeat units lie at residues 490 to 531 (LQQA…YENV), 567 to 607 (VSRS…ACMG), and 616 to 663 (CQRA…AVIG).

Belongs to the terpene cyclase/mutase family.

It catalyses the reaction (S)-2,3-epoxysqualene = (17Z)-protosta-17(20),24-dien-3beta-ol. In terms of biological role, protostadienol synthase which cyclizes (3S)-oxidosqualene to (17Z)-protosta-17(20),24-dien-3-beta-ol (protostadienol), the biosynthetic precursor of helvolic acid, a secondary metabolite which promotes virulence. This is Protostadienol synthase A (pdsA) from Neosartorya fischeri (strain ATCC 1020 / DSM 3700 / CBS 544.65 / FGSC A1164 / JCM 1740 / NRRL 181 / WB 181) (Aspergillus fischerianus).